Reading from the N-terminus, the 429-residue chain is MTMNFVTFNQDYSYLAVATSKGFRIFTTDPFAKSYETKDGNIAIIEMLFSTSLVALILSPRRLQITNTKRQSTICELTFPTTVLAVKLNRKRLVIVLEDQIYLYDIQTMKLLYTIETSPNPNALCALSPSSENCYLAYPLPQKAAPSSFNPPAHAPPGNTHVSPTSGEVLIFDTLKLEAINVIEAHRSPLACITLNSDGTLIATASDKGTIIRVFSVPDGHKLYQFRRGSIPSRIFSMSFNTTSTLLCVSSSTETIHLFKLSQPSQLQETSSANTSSTGRRRSLSSLSQSPEREATEEDNGSSDLASRKHNGTLMGMLRRTSQNVGGAFAAKVGGYLPKGVSEMWEPARDFAWIKIPKPNQGQGPNANTGPLRSVVAMSSNTPQVMVVTSDGNFYVFSIDLSKGGEGTLTKQYSVLESNDRLGYSVADY.

WD repeat units lie at residues 1–36, 69–114, 139–182, 185–225, 230–269, 309–355, and 367–407; these read MTMN…KSYE, KRQS…LLYT, PLPQ…AINV, AHRS…KLYQ, SIPS…QLQE, KHNG…AWIK, and ANTG…GGEG. Residues 226–230 carry the L/FRRG motif motif; that stretch reads FRRGS. Positions 267–309 are disordered; it reads LQETSSANTSSTGRRRSLSSLSQSPEREATEEDNGSSDLASRK.

The protein belongs to the WD repeat PROPPIN family. In terms of assembly, component of the PI(3,5)P2 regulatory complex.

It localises to the preautophagosomal structure membrane. It is found in the vacuole membrane. Its subcellular location is the endosome membrane. Its function is as follows. The PI(3,5)P2 regulatory complex regulates both the synthesis and turnover of phosphatidylinositol 3,5-bisphosphate (PtdIns(3,5)P2). Necessary for proper vacuole morphology. Plays an important role in osmotically-induced vacuole fragmentation. Required for cytoplasm to vacuole transport (Cvt) vesicle formation, pexophagy and starvation-induced autophagy. Involved in correct ATG9 trafficking to the pre-autophagosomal structure. Might also be involved in premeiotic DNA replication. The protein is Autophagy-related protein 18 (atg18) of Emericella nidulans (strain FGSC A4 / ATCC 38163 / CBS 112.46 / NRRL 194 / M139) (Aspergillus nidulans).